A 374-amino-acid polypeptide reads, in one-letter code: tRNA-specific 2-thiouridylase MnmA (374 aa).

ATP-binding positions include 12–19 (GMSGGVDS) and Met-38. An interaction with target base in tRNA region spans residues 98 to 100 (NPD). Cys-103 serves as the catalytic Nucleophile. The cysteines at positions 103 and 202 are disulfide-linked. Residue Gly-128 participates in ATP binding. An interaction with tRNA region spans residues 152-154 (KDQ). Residue Cys-202 is the Cysteine persulfide intermediate of the active site. The tract at residues 316–317 (RY) is interaction with tRNA.

This sequence belongs to the MnmA/TRMU family.

Its subcellular location is the cytoplasm. It carries out the reaction S-sulfanyl-L-cysteinyl-[protein] + uridine(34) in tRNA + AH2 + ATP = 2-thiouridine(34) in tRNA + L-cysteinyl-[protein] + A + AMP + diphosphate + H(+). In terms of biological role, catalyzes the 2-thiolation of uridine at the wobble position (U34) of tRNA, leading to the formation of s(2)U34. The chain is tRNA-specific 2-thiouridylase MnmA from Vibrio vulnificus (strain CMCP6).